The following is a 158-amino-acid chain: Peptide deformylase (158 aa).

The Fe cation site is built by Cys88 and His130. The active site involves Glu131. His134 serves as a coordination point for Fe cation.

The protein belongs to the polypeptide deformylase family. The cofactor is Fe(2+).

It carries out the reaction N-terminal N-formyl-L-methionyl-[peptide] + H2O = N-terminal L-methionyl-[peptide] + formate. In terms of biological role, removes the formyl group from the N-terminal Met of newly synthesized proteins. Requires at least a dipeptide for an efficient rate of reaction. N-terminal L-methionine is a prerequisite for activity but the enzyme has broad specificity at other positions. This chain is Peptide deformylase, found in Agathobacter rectalis (strain ATCC 33656 / DSM 3377 / JCM 17463 / KCTC 5835 / VPI 0990) (Eubacterium rectale).